A 308-amino-acid polypeptide reads, in one-letter code: Acetyl-coenzyme A carboxylase carboxyl transferase subunit beta (308 aa).

Residues 46-308 (LWVKCPDTGE…LMMGRGLKAA (263 aa)) enclose the CoA carboxyltransferase N-terminal domain.

It belongs to the AccD/PCCB family. As to quaternary structure, acetyl-CoA carboxylase is a heterohexamer composed of biotin carboxyl carrier protein (AccB), biotin carboxylase (AccC) and two subunits each of ACCase subunit alpha (AccA) and ACCase subunit beta (AccD).

The protein localises to the cytoplasm. It carries out the reaction N(6)-carboxybiotinyl-L-lysyl-[protein] + acetyl-CoA = N(6)-biotinyl-L-lysyl-[protein] + malonyl-CoA. It functions in the pathway lipid metabolism; malonyl-CoA biosynthesis; malonyl-CoA from acetyl-CoA: step 1/1. In terms of biological role, component of the acetyl coenzyme A carboxylase (ACC) complex. Biotin carboxylase (BC) catalyzes the carboxylation of biotin on its carrier protein (BCCP) and then the CO(2) group is transferred by the transcarboxylase to acetyl-CoA to form malonyl-CoA. The chain is Acetyl-coenzyme A carboxylase carboxyl transferase subunit beta from Caulobacter sp. (strain K31).